The chain runs to 482 residues: O-phosphoseryl-tRNA(Sec) selenium transferase (482 aa).

The tetramerization stretch occupies residues 1 to 36 (MKSSFGKKEGEYSRLVSKSSNKLLNSLWEKKQIPEE). R69 lines the pyridoxal 5'-phosphate pocket. The interval 90–100 (GRSGNLLEIQP) is phosphate loop (P-loop). Residues R91, S92, and Q99 each coordinate substrate. Position 277 is an N6-(pyridoxal phosphate)lysine (K277). R306 serves as a coordination point for substrate. R388 contributes to the tRNA binding site. The disordered stretch occupies residues 461 to 482 (DRRGGSSGRRVPMNESFDMEND).

The protein belongs to the SepSecS family. Homotetramer formed by a catalytic dimer and a non-catalytic dimer serving as a binding platform that orients tRNASec for catalysis. Each tetramer binds the CCA ends of two tRNAs which point to the active sites of the catalytic dimer. Pyridoxal 5'-phosphate serves as cofactor.

It is found in the cytoplasm. It carries out the reaction O-phospho-L-seryl-tRNA(Sec) + selenophosphate + H2O = L-selenocysteinyl-tRNA(Sec) + 2 phosphate. Its pathway is aminoacyl-tRNA biosynthesis; selenocysteinyl-tRNA(Sec) biosynthesis; selenocysteinyl-tRNA(Sec) from L-seryl-tRNA(Sec) (archaeal/eukaryal route): step 2/2. Its function is as follows. Converts O-phosphoseryl-tRNA(Sec) to selenocysteinyl-tRNA(Sec) required for selenoprotein biosynthesis. This is O-phosphoseryl-tRNA(Sec) selenium transferase (secs-1) from Caenorhabditis briggsae.